Here is a 360-residue protein sequence, read N- to C-terminus: Holliday junction branch migration complex subunit RuvB (360 aa).

Positions 1–23 (MIASVGDSRYYPKSVANGEKSDQ) are disordered. Positions 12-204 (PKSVANGEKS…FGIVLRLEFY (193 aa)) are large ATPase domain (RuvB-L). Residues Leu-43, Arg-44, Gly-85, Lys-88, Thr-89, Thr-90, 151 to 153 (EDY), Arg-194, Tyr-204, and Arg-241 each bind ATP. Thr-89 is a Mg(2+) binding site. The interval 205-275 (TTEDLKIILK…TAQKALEMLE (71 aa)) is small ATPAse domain (RuvB-S). A head domain (RuvB-H) region spans residues 278 to 360 (QHGFDEVDRR…KPPKKQDSLF (83 aa)). The DNA site is built by Arg-333 and Arg-338.

This sequence belongs to the RuvB family. As to quaternary structure, homohexamer. Forms an RuvA(8)-RuvB(12)-Holliday junction (HJ) complex. HJ DNA is sandwiched between 2 RuvA tetramers; dsDNA enters through RuvA and exits via RuvB. An RuvB hexamer assembles on each DNA strand where it exits the tetramer. Each RuvB hexamer is contacted by two RuvA subunits (via domain III) on 2 adjacent RuvB subunits; this complex drives branch migration. In the full resolvosome a probable DNA-RuvA(4)-RuvB(12)-RuvC(2) complex forms which resolves the HJ.

Its subcellular location is the cytoplasm. It carries out the reaction ATP + H2O = ADP + phosphate + H(+). The RuvA-RuvB-RuvC complex processes Holliday junction (HJ) DNA during genetic recombination and DNA repair, while the RuvA-RuvB complex plays an important role in the rescue of blocked DNA replication forks via replication fork reversal (RFR). RuvA specifically binds to HJ cruciform DNA, conferring on it an open structure. The RuvB hexamer acts as an ATP-dependent pump, pulling dsDNA into and through the RuvAB complex. RuvB forms 2 homohexamers on either side of HJ DNA bound by 1 or 2 RuvA tetramers; 4 subunits per hexamer contact DNA at a time. Coordinated motions by a converter formed by DNA-disengaged RuvB subunits stimulates ATP hydrolysis and nucleotide exchange. Immobilization of the converter enables RuvB to convert the ATP-contained energy into a lever motion, pulling 2 nucleotides of DNA out of the RuvA tetramer per ATP hydrolyzed, thus driving DNA branch migration. The RuvB motors rotate together with the DNA substrate, which together with the progressing nucleotide cycle form the mechanistic basis for DNA recombination by continuous HJ branch migration. Branch migration allows RuvC to scan DNA until it finds its consensus sequence, where it cleaves and resolves cruciform DNA. In Koribacter versatilis (strain Ellin345), this protein is Holliday junction branch migration complex subunit RuvB.